The chain runs to 535 residues: Bifunctional purine biosynthesis protein PurH (535 aa).

The 146-residue stretch at 6-151 (TRLPVRRALI…KNHKDVAIVV (146 aa)) folds into the MGS-like domain.

It belongs to the PurH family.

It carries out the reaction (6R)-10-formyltetrahydrofolate + 5-amino-1-(5-phospho-beta-D-ribosyl)imidazole-4-carboxamide = 5-formamido-1-(5-phospho-D-ribosyl)imidazole-4-carboxamide + (6S)-5,6,7,8-tetrahydrofolate. The enzyme catalyses IMP + H2O = 5-formamido-1-(5-phospho-D-ribosyl)imidazole-4-carboxamide. The protein operates within purine metabolism; IMP biosynthesis via de novo pathway; 5-formamido-1-(5-phospho-D-ribosyl)imidazole-4-carboxamide from 5-amino-1-(5-phospho-D-ribosyl)imidazole-4-carboxamide (10-formyl THF route): step 1/1. It participates in purine metabolism; IMP biosynthesis via de novo pathway; IMP from 5-formamido-1-(5-phospho-D-ribosyl)imidazole-4-carboxamide: step 1/1. The sequence is that of Bifunctional purine biosynthesis protein PurH from Pseudomonas putida (strain GB-1).